The sequence spans 565 residues: MRQSKFFMPTLKEAPSDAVAKSHQLMLRGGYIRQVTAGVYAYLPLGYRVLRKAENIIEEEMDNINVPEMIMPHLLPATLWQESGRYKKYGAEMFKLQDRHGRESLLGPTHEETFTEIVAKNLKSYKQMPLALYQIQTKFRDENRPRFGLLRGREFVMLDGYSFAATREQLDEQFDDQKSAYLKIFNRAGVTVHPVIADSGTMGGKNSTEFQAPAAIGEDTIATNEKGTYAANLEMAKSIDTFKQEPEEAKDLAKVATPGMDTIEKLADFLKVPSTRIVKSILYIADDQKVLVLIRGDKEINEVKLGHILDADEVRTANADELVEITGSEKGGVGPINADWADKIIADETVKDLYNVVVGANETDYQYQNANLDRDFKVDEFADIRTANEGEPDPVDHLPLKFTTSIEVGHIFKLGTYYTDTMGADFLDNNGKAKPVIMGSYGIGVTRMLSAAVEQHLTENGIAWPKEIAPFAIHLIQMKMKDETQTKLAEKLEKELSAKYDVLYDDRNERPGVKFNDADLVGAPLRITIGRKAKDGIVEVKRPMDEKATEVNISDLDAVITKELG.

This sequence belongs to the class-II aminoacyl-tRNA synthetase family. ProS type 1 subfamily. In terms of assembly, homodimer.

It localises to the cytoplasm. The enzyme catalyses tRNA(Pro) + L-proline + ATP = L-prolyl-tRNA(Pro) + AMP + diphosphate. Its function is as follows. Catalyzes the attachment of proline to tRNA(Pro) in a two-step reaction: proline is first activated by ATP to form Pro-AMP and then transferred to the acceptor end of tRNA(Pro). As ProRS can inadvertently accommodate and process non-cognate amino acids such as alanine and cysteine, to avoid such errors it has two additional distinct editing activities against alanine. One activity is designated as 'pretransfer' editing and involves the tRNA(Pro)-independent hydrolysis of activated Ala-AMP. The other activity is designated 'posttransfer' editing and involves deacylation of mischarged Ala-tRNA(Pro). The misacylated Cys-tRNA(Pro) is not edited by ProRS. This is Proline--tRNA ligase from Lactobacillus johnsonii (strain CNCM I-12250 / La1 / NCC 533).